The chain runs to 1196 residues: DNA excision repair protein ERCC-5 homolog (1196 aa).

The interval 1–78 is N-domain; that stretch reads MGVQGLWKLL…RIRPIFVFDG (78 aa). A Mg(2+)-binding site is contributed by aspartate 30. Residues 31–67 form a DNA-binding; may bind to the undamaged single-strand DNA of the DNA repair bubble region; that stretch reads ISIWLNQAVKGARDRQGNAIQNAHLLTLFHRLCKLLF. Aspartate 77 lines the Mg(2+) pocket. Positions 79-818 are spacer region; the sequence is EAPLLKRQTL…LQLFGIPYIV (740 aa). Disordered regions lie at residues 152–176, 302–321, 629–661, and 722–758; these read PLEDNENNSSEEEEEREWEERMNQK, KQEEKKVDSPPQSITFNSSQ, QTTQPSGGSEVNKPAEYNPQDKKVFGSNDSSAM, and AVEEGNSGSQDIPLEHDSGEPHEQSNSEESKDLDDVS. Residues 154–168 are compositionally biased toward acidic residues; that stretch reads EDNENNSSEEEEERE. Polar residues predominate over residues 311–321; that stretch reads PPQSITFNSSQ. The span at 722–731 shows a compositional bias: polar residues; sequence AVEEGNSGSQ. A compositionally biased stretch (basic and acidic residues) spans 734-755; that stretch reads PLEHDSGEPHEQSNSEESKDLD. The I-domain stretch occupies residues 819 to 914; that stretch reads APMEAEAQCA…VSAMEILNEF (96 aa). Mg(2+)-binding residues include glutamate 822, glutamate 824, aspartate 843, and aspartate 845. The tract at residues 853–869 is DNA-binding; may bind to the undamaged single-strand DNA of the DNA repair bubble; that stretch reads HVYKNFFSQNKHVEYYQ. The interval 881–913 is DNA-binding; H2TH (helix-2turn-helix) motif which binds double-stranded DNA; sequence RSKLINLAYLLGSDYTEGIPTVGYVSAMEILNE. Aspartate 894 provides a ligand contact to Mg(2+). The segment at 945 to 951 is DNA-binding; may bind double-stranded DNA; that stretch reads TKVKKKL. The tract at residues 1075–1196 is disordered; sequence CTNQRKGQKT…KTMKETVKRK (122 aa). The Nuclear localization signal 1 signature appears at 1079–1095; the sequence is RKGQKTNTKSQGTKRRK. Residues 1119-1130 are compositionally biased toward low complexity; sequence SSKAYSSDGSSS. The span at 1142–1158 shows a compositional bias: polar residues; sequence KQSQSGIVGRQKASNKV. The short motif at 1179–1196 is the Nuclear localization signal 2 element; that stretch reads FQGKKTKSKTMKETVKRK.

Belongs to the XPG/RAD2 endonuclease family. XPG subfamily. In terms of assembly, monomer. Homodimer. It depends on Mg(2+) as a cofactor.

Its subcellular location is the nucleus. The protein resides in the chromosome. Functionally, single-stranded structure-specific DNA endonuclease involved in DNA excision repair. Makes the 3'incision in DNA nucleotide excision repair (NER). Binds and bends DNA repair bubble substrate and breaks base stacking at the single-strand/double-strand DNA junction of the DNA bubble. Plays a role in base excision repair (BER) by promoting the binding of DNA glycosylase to its substrate and increasing DNA glycosylase catalytic activity that removes oxidized pyrimidines from DNA. Involved in transcription-coupled nucleotide excision repair (TCR) which allows RNA polymerase II-blocking lesions to be rapidly removed from the transcribed strand of active genes. Required for DNA replication fork maintenance and preservation of genomic stability. Involved in homologous recombination repair (HRR) induced by DNA replication stress. During HRR, binds to the replication fork with high specificity and stabilizes it. This chain is DNA excision repair protein ERCC-5 homolog (ercc5), found in Xenopus laevis (African clawed frog).